The chain runs to 692 residues: NAD(P)H-quinone oxidoreductase subunit 5, chloroplastic (692 aa).

17 helical membrane passes run 9-29 (WFVP…LFFF), 39-59 (LSSF…FHFF), 89-109 (LDPL…MVMI), 120-140 (GYIK…GLVL), 147-167 (VYIF…FWFT), 184-204 (IGDF…GSFD), 219-239 (NQIN…GPVA), 258-278 (TPIS…FLVA), 289-309 (FVMS…ATIA), 327-347 (LGYM…FHLI), 354-374 (ALLF…VGYH), 395-415 (AITF…ACFW), 425-445 (WLHF…TAFY), 503-523 (LFPL…GILF), 555-575 (FLFN…IAFY), 643-663 (WIID…GESL), and 671-691 (ISSY…YSYI).

Belongs to the complex I subunit 5 family. In terms of assembly, NDH is composed of at least 16 different subunits, 5 of which are encoded in the nucleus.

It localises to the plastid. The protein localises to the chloroplast thylakoid membrane. It catalyses the reaction a plastoquinone + NADH + (n+1) H(+)(in) = a plastoquinol + NAD(+) + n H(+)(out). It carries out the reaction a plastoquinone + NADPH + (n+1) H(+)(in) = a plastoquinol + NADP(+) + n H(+)(out). NDH shuttles electrons from NAD(P)H:plastoquinone, via FMN and iron-sulfur (Fe-S) centers, to quinones in the photosynthetic chain and possibly in a chloroplast respiratory chain. The immediate electron acceptor for the enzyme in this species is believed to be plastoquinone. Couples the redox reaction to proton translocation, and thus conserves the redox energy in a proton gradient. In Marchantia polymorpha (Common liverwort), this protein is NAD(P)H-quinone oxidoreductase subunit 5, chloroplastic (ndhF).